A 270-amino-acid chain; its full sequence is 4-hydroxy-tetrahydrodipicolinate reductase (270 aa).

NAD(+) contacts are provided by residues 9–14 (GAGGRM) and E35. An NADP(+)-binding site is contributed by R36. Residues 99-101 (GTT) and 123-126 (ASNF) contribute to the NAD(+) site. The Proton donor/acceptor role is filled by H156. H157 is a binding site for (S)-2,3,4,5-tetrahydrodipicolinate. The active-site Proton donor is K160. Residue 166–167 (GT) participates in (S)-2,3,4,5-tetrahydrodipicolinate binding.

This sequence belongs to the DapB family.

Its subcellular location is the cytoplasm. The catalysed reaction is (S)-2,3,4,5-tetrahydrodipicolinate + NAD(+) + H2O = (2S,4S)-4-hydroxy-2,3,4,5-tetrahydrodipicolinate + NADH + H(+). It catalyses the reaction (S)-2,3,4,5-tetrahydrodipicolinate + NADP(+) + H2O = (2S,4S)-4-hydroxy-2,3,4,5-tetrahydrodipicolinate + NADPH + H(+). The protein operates within amino-acid biosynthesis; L-lysine biosynthesis via DAP pathway; (S)-tetrahydrodipicolinate from L-aspartate: step 4/4. In terms of biological role, catalyzes the conversion of 4-hydroxy-tetrahydrodipicolinate (HTPA) to tetrahydrodipicolinate. In Haemophilus influenzae (strain PittGG), this protein is 4-hydroxy-tetrahydrodipicolinate reductase.